We begin with the raw amino-acid sequence, 20 residues long: Succinate--CoA ligase [ADP-forming] subunit beta, mitochondrial (20 aa).

One can recognise an ATP-grasp domain in the interval 8-20 (SMELLQEAGVSIP).

It belongs to the succinate/malate CoA ligase beta subunit family. ATP-specific subunit beta subfamily. Heterodimer of an alpha and a beta subunit. The beta subunit determines specificity for ATP. Interacts with ALAS2.

Its subcellular location is the mitochondrion. It catalyses the reaction succinate + ATP + CoA = succinyl-CoA + ADP + phosphate. Its pathway is carbohydrate metabolism; tricarboxylic acid cycle; succinate from succinyl-CoA (ligase route): step 1/1. Its function is as follows. ATP-specific succinyl-CoA synthetase functions in the citric acid cycle (TCA), coupling the hydrolysis of succinyl-CoA to the synthesis of ATP and thus represents the only step of substrate-level phosphorylation in the TCA. The beta subunit provides nucleotide specificity of the enzyme and binds the substrate succinate, while the binding sites for coenzyme A and phosphate are found in the alpha subunit. The polypeptide is Succinate--CoA ligase [ADP-forming] subunit beta, mitochondrial (Canis lupus familiaris (Dog)).